The following is a 127-amino-acid chain: Large ribosomal subunit protein uL22 (127 aa).

Low complexity predominate over residues 106–117 (GAPEGVPVGGAV). The segment at 106–127 (GAPEGVPVGGAVDTPGDEEEEE) is disordered.

Belongs to the universal ribosomal protein uL22 family. Part of the 50S ribosomal subunit.

Its function is as follows. This protein binds specifically to 23S rRNA; its binding is stimulated by other ribosomal proteins, e.g. L4, L17, and L20. It is important during the early stages of 50S assembly. It makes multiple contacts with different domains of the 23S rRNA in the assembled 50S subunit and ribosome. The globular domain of the protein is located near the polypeptide exit tunnel on the outside of the subunit, while an extended beta-hairpin is found that lines the wall of the exit tunnel in the center of the 70S ribosome. The chain is Large ribosomal subunit protein uL22 from Rubrobacter xylanophilus (strain DSM 9941 / JCM 11954 / NBRC 16129 / PRD-1).